Reading from the N-terminus, the 415-residue chain is Serine hydroxymethyltransferase 1 (415 aa).

Residues leucine 122 and 126–128 (GHL) each bind (6S)-5,6,7,8-tetrahydrofolate. Lysine 230 is subject to N6-(pyridoxal phosphate)lysine.

This sequence belongs to the SHMT family. As to quaternary structure, homodimer. Pyridoxal 5'-phosphate serves as cofactor.

The protein localises to the cytoplasm. It catalyses the reaction (6R)-5,10-methylene-5,6,7,8-tetrahydrofolate + glycine + H2O = (6S)-5,6,7,8-tetrahydrofolate + L-serine. It functions in the pathway one-carbon metabolism; tetrahydrofolate interconversion. The protein operates within amino-acid biosynthesis; glycine biosynthesis; glycine from L-serine: step 1/1. Catalyzes the reversible interconversion of serine and glycine with tetrahydrofolate (THF) serving as the one-carbon carrier. This reaction serves as the major source of one-carbon groups required for the biosynthesis of purines, thymidylate, methionine, and other important biomolecules. Also exhibits THF-independent aldolase activity toward beta-hydroxyamino acids, producing glycine and aldehydes, via a retro-aldol mechanism. This is Serine hydroxymethyltransferase 1 from Burkholderia thailandensis (strain ATCC 700388 / DSM 13276 / CCUG 48851 / CIP 106301 / E264).